Consider the following 289-residue polypeptide: Formamidopyrimidine-DNA glycosylase (289 aa).

The active-site Schiff-base intermediate with DNA is P2. The Proton donor role is filled by E3. K61 functions as the Proton donor; for beta-elimination activity in the catalytic mechanism. H97, R119, and K168 together coordinate DNA. The segment at 254-288 (NAYGRAGKPCPRCGEPIVRVQWTNRSSHFCPQCQS) adopts an FPG-type zinc-finger fold. Residue R278 is the Proton donor; for delta-elimination activity of the active site.

It belongs to the FPG family. As to quaternary structure, monomer. Requires Zn(2+) as cofactor.

It catalyses the reaction Hydrolysis of DNA containing ring-opened 7-methylguanine residues, releasing 2,6-diamino-4-hydroxy-5-(N-methyl)formamidopyrimidine.. The enzyme catalyses 2'-deoxyribonucleotide-(2'-deoxyribose 5'-phosphate)-2'-deoxyribonucleotide-DNA = a 3'-end 2'-deoxyribonucleotide-(2,3-dehydro-2,3-deoxyribose 5'-phosphate)-DNA + a 5'-end 5'-phospho-2'-deoxyribonucleoside-DNA + H(+). Involved in base excision repair of DNA damaged by oxidation or by mutagenic agents. Acts as a DNA glycosylase that recognizes and removes damaged bases. Has a preference for oxidized purines, such as 7,8-dihydro-8-oxoguanine (8-oxoG). Has AP (apurinic/apyrimidinic) lyase activity and introduces nicks in the DNA strand. Cleaves the DNA backbone by beta-delta elimination to generate a single-strand break at the site of the removed base with both 3'- and 5'-phosphates. The protein is Formamidopyrimidine-DNA glycosylase of Corynebacterium urealyticum (strain ATCC 43042 / DSM 7109).